The chain runs to 251 residues: Flap endonuclease Xni (251 aa).

Asp104 contacts Mg(2+). Residues 160-249 enclose the 5'-3' exonuclease domain; the sequence is VLPRQLPDYW…IDGNLQQLRL (90 aa). Residues Leu171, Ala172, Pro180, Val182, and Ile185 each coordinate K(+). Residues 184–189 are interaction with DNA; sequence GIGPKS.

This sequence belongs to the Xni family. Mg(2+) serves as cofactor. K(+) is required as a cofactor.

Has flap endonuclease activity. During DNA replication, flap endonucleases cleave the 5'-overhanging flap structure that is generated by displacement synthesis when DNA polymerase encounters the 5'-end of a downstream Okazaki fragment. This is Flap endonuclease Xni from Salmonella paratyphi A (strain ATCC 9150 / SARB42).